Reading from the N-terminus, the 152-residue chain is SsrA-binding protein (152 aa).

The protein belongs to the SmpB family.

The protein localises to the cytoplasm. Its function is as follows. Required for rescue of stalled ribosomes mediated by trans-translation. Binds to transfer-messenger RNA (tmRNA), required for stable association of tmRNA with ribosomes. tmRNA and SmpB together mimic tRNA shape, replacing the anticodon stem-loop with SmpB. tmRNA is encoded by the ssrA gene; the 2 termini fold to resemble tRNA(Ala) and it encodes a 'tag peptide', a short internal open reading frame. During trans-translation Ala-aminoacylated tmRNA acts like a tRNA, entering the A-site of stalled ribosomes, displacing the stalled mRNA. The ribosome then switches to translate the ORF on the tmRNA; the nascent peptide is terminated with the 'tag peptide' encoded by the tmRNA and targeted for degradation. The ribosome is freed to recommence translation, which seems to be the essential function of trans-translation. The protein is SsrA-binding protein of Rickettsia montanensis.